The following is a 181-amino-acid chain: Nucleoside triphosphate/diphosphate phosphatase (181 aa).

R26 functions as the Proton donor in the catalytic mechanism. N90, D106, D108, D110, D123, and E126 together coordinate Mg(2+).

It belongs to the Ntdp family. Mg(2+) is required as a cofactor.

The catalysed reaction is a ribonucleoside 5'-triphosphate + H2O = a ribonucleoside 5'-diphosphate + phosphate + H(+). It carries out the reaction a ribonucleoside 5'-diphosphate + H2O = a ribonucleoside 5'-phosphate + phosphate + H(+). Its function is as follows. Has nucleoside phosphatase activity towards nucleoside triphosphates and nucleoside diphosphates. This chain is Nucleoside triphosphate/diphosphate phosphatase, found in Ligilactobacillus salivarius (strain UCC118) (Lactobacillus salivarius).